The chain runs to 443 residues: MATSRAALCAVAVVCVVLAAACAPARAIHVGTPAAALFEEFKRTYGRAYETLAEEQQRLANFERNLELMREHQARNPHAQFGITKFFDLSEAEFAARYLNGAAYFAAAKRHAAQHYRKARADLSAVPDAVDWREKGAVTPVKDQGACGSCWAFSAVGNIEGQWYLAGHELVSLSEQQLVSCDDMNDGCDGGLMLQAFDWLLQNTNGHLHTEDSYPYVSGNGYVPECSNSSELVVGAQIDGHVLIGSSEKAMAAWLAKNGPIAIALDASSFMSYKSGVLTACIGKQLNHGVLLVGYDMTGEVPYWVIKNSWGGDWGEQGYVRVVMGVNACLLSEYPVSAHVRESAAPGTSTSSETPAPRPVMVEQVICFDKNCTQGCRKTLIKANECHKNGGGGASMIKCSPQKVTMCTYSNEFCVGGGLCFETPDGKCAPYFLGSIMNTCHYT.

The N-terminal stretch at 1–27 (MATSRAALCAVAVVCVVLAAACAPARA) is a signal peptide. A propeptide spans 28–125 (IHVGTPAAAL…YRKARADLSA (98 aa)) (activation peptide). 2 disulfides stabilise this stretch: C147–C188 and C181–C226. The active site involves C150. The N-linked (GlcNAc...) asparagine glycan is linked to N228. Residues C281 and C329 are joined by a disulfide bond. Active-site residues include H288 and N308.

Belongs to the peptidase C1 family.

This is Cysteine proteinase B (LMCPB) from Leishmania mexicana.